The following is a 381-amino-acid chain: MIKFGEAVLGNEIKAIVNVALGKGELIENTFTNALTRGNCVFANLRPNLIVKPLTLVVPRHNIESEIQDELFQGVIQYAVAKAVADLDLDEDLKVVVSVNVPEVPITNLNKRKLFQYFYASAKLAINRALNEYPSKEKVKKEKYRALHPLVGFRDVRLEYPPYLQIALDVPTMENLEFLLQTIPNSDHIILEAGTPLIKKFGLEVIEIMREYFDGFIVADLKTLDTGRVEVRLAFEATANAVAISGVAPKSTIIKAIHECQKCGLISYLDMMNVSEPQKLYDSLKLKPDVVILHRGIDEETFGIKKEWKFKENCLLAIAGGVGVENVEELLKEYQILIVGRAITKSKDPGRVIRMFINKMGYDIDTYRLYFDEDEDIGEEL.

The formaldehyde-activating enzyme stretch occupies residues 1 to 150 (MIKFGEAVLG…KEKYRALHPL (150 aa)). The segment at 151–381 (VGFRDVRLEY…DEDEDIGEEL (231 aa)) is 3-hexulose-6-phosphate synthase.

It in the N-terminal section; belongs to the formaldehyde-activating enzyme family. In the C-terminal section; belongs to the HPS/KGPDC family. HPS subfamily.

The enzyme catalyses 5,6,7,8-tetrahydromethanopterin + formaldehyde = 5,10-methylenetetrahydromethanopterin + H2O. It catalyses the reaction D-ribulose 5-phosphate + formaldehyde = D-arabino-hex-3-ulose 6-phosphate. It functions in the pathway carbohydrate biosynthesis; D-ribose 5-phosphate biosynthesis. Its function is as follows. Catalyzes the condensation of formaldehyde with tetrahydromethanopterin (H(4)MPT) to 5,10-methylenetetrahydromethanopterin. Functionally, catalyzes the reversible formation of ribulose-5-phosphate and formaldehyde from 3-hexulose-6-phosphate. The polypeptide is Bifunctional enzyme Fae/Hps (Methanocaldococcus jannaschii (strain ATCC 43067 / DSM 2661 / JAL-1 / JCM 10045 / NBRC 100440) (Methanococcus jannaschii)).